We begin with the raw amino-acid sequence, 204 residues long: Large ribosomal subunit protein bL25 (204 aa).

Belongs to the bacterial ribosomal protein bL25 family. CTC subfamily. As to quaternary structure, part of the 50S ribosomal subunit; part of the 5S rRNA/L5/L18/L25 subcomplex. Contacts the 5S rRNA. Binds to the 5S rRNA independently of L5 and L18.

Its function is as follows. This is one of the proteins that binds to the 5S RNA in the ribosome where it forms part of the central protuberance. The polypeptide is Large ribosomal subunit protein bL25 (Rhizobium etli (strain ATCC 51251 / DSM 11541 / JCM 21823 / NBRC 15573 / CFN 42)).